The chain runs to 264 residues: Putative hydro-lyase Psyr_0498 (264 aa).

Belongs to the D-glutamate cyclase family.

The chain is Putative hydro-lyase Psyr_0498 from Pseudomonas syringae pv. syringae (strain B728a).